The sequence spans 230 residues: MPALFVTGTGTDIGKTHVSCALIRALKVRGAVVDAFKPVVSGFDPKDAAGSDPARLAIALGDPSAVFRIAPRRYRAPLSPNIAAQLEGETLVLDDMVIDAVARAAELRDGLLLVEGAGGVMSPLTDTQTNLDMIVALGAPVLLVAGSYLGTISHVLTALVALRAAKVRVAAVVISESLDAPDLDQTAQALAPFLDGAPLFLAPRGESWDAGALADHLLAAVAPNAFGGTP.

12–17 lines the ATP pocket; the sequence is DIGKTH. Residue Thr16 coordinates Mg(2+). Lys37 is a catalytic residue. Position 41 (Ser41) interacts with substrate. Residues Asp52, 115–118, and 175–176 contribute to the ATP site; these read EGAG and SE. 2 residues coordinate Mg(2+): Asp52 and Glu115.

This sequence belongs to the dethiobiotin synthetase family. Homodimer. Requires Mg(2+) as cofactor.

The protein localises to the cytoplasm. The catalysed reaction is (7R,8S)-7,8-diammoniononanoate + CO2 + ATP = (4R,5S)-dethiobiotin + ADP + phosphate + 3 H(+). Its pathway is cofactor biosynthesis; biotin biosynthesis; biotin from 7,8-diaminononanoate: step 1/2. Functionally, catalyzes a mechanistically unusual reaction, the ATP-dependent insertion of CO2 between the N7 and N8 nitrogen atoms of 7,8-diaminopelargonic acid (DAPA, also called 7,8-diammoniononanoate) to form a ureido ring. This chain is ATP-dependent dethiobiotin synthetase BioD, found in Caulobacter sp. (strain K31).